The following is a 390-amino-acid chain: Tuftelin (390 aa).

Coiled coils occupy residues 88–126 and 162–351; these read DKMIHEKNINQLKSEVQYIQEARNCLQKLREDISSKLDR and DTCI…IEKQ. The tract at residues 358–390 is disordered; it reads STQARAKTENPGSIRISKPPSPKPMPVIRVVET.

The protein belongs to the tuftelin family. In terms of assembly, interacts with TFIP11. As to expression, expressed in the epidermis (at protein level). Present in the extracellular enamel and is mainly associated with the crystal component.

It localises to the secreted. Functionally, involved in the structural organization of the epidermis. Involved in the mineralization and structural organization of enamel. The protein is Tuftelin (TUFT1) of Homo sapiens (Human).